A 332-amino-acid chain; its full sequence is D-lactate dehydrogenase (332 aa).

NAD(+) contacts are provided by residues 155–156 (RI), Asp175, 206–207 (VP), Asn212, 233–235 (FAR), and Asp259. Residue Arg235 is part of the active site. Residue Glu264 is part of the active site. Catalysis depends on His296, which acts as the Proton donor.

This sequence belongs to the D-isomer specific 2-hydroxyacid dehydrogenase family.

It carries out the reaction (R)-lactate + NAD(+) = pyruvate + NADH + H(+). In Lactiplantibacillus plantarum (strain ATCC BAA-793 / NCIMB 8826 / WCFS1) (Lactobacillus plantarum), this protein is D-lactate dehydrogenase (ldhD).